The chain runs to 270 residues: FKBP-type peptidyl-prolyl cis-trans isomerase FkpA (270 aa).

An N-terminal signal peptide occupies residues 1 to 25 (MKSLFKVTLLATTMAVALHAPITFA). The region spanning 164–249 (SDTVVVNYKG…VFDVELLDVK (86 aa)) is the PPIase FKBP-type domain.

This sequence belongs to the FKBP-type PPIase family.

It localises to the periplasm. The enzyme catalyses [protein]-peptidylproline (omega=180) = [protein]-peptidylproline (omega=0). Functionally, PPIases accelerate the folding of proteins. It catalyzes the cis-trans isomerization of proline imidic peptide bonds in oligopeptides. In Escherichia coli O157:H7, this protein is FKBP-type peptidyl-prolyl cis-trans isomerase FkpA (fkpA).